The following is a 314-amino-acid chain: Dihydropteroate synthase (314 aa).

The Pterin-binding domain maps to 10–294 (TVICGIINVT…DVASHRMAVE (285 aa)). N17 contacts Mg(2+). (7,8-dihydropterin-6-yl)methyl diphosphate is bound by residues D91, N110, D201, K237, and 282–284 (RVH).

It belongs to the DHPS family. In terms of assembly, homodimer. It depends on Mg(2+) as a cofactor.

The enzyme catalyses (7,8-dihydropterin-6-yl)methyl diphosphate + 4-aminobenzoate = 7,8-dihydropteroate + diphosphate. It functions in the pathway cofactor biosynthesis; tetrahydrofolate biosynthesis; 7,8-dihydrofolate from 2-amino-4-hydroxy-6-hydroxymethyl-7,8-dihydropteridine diphosphate and 4-aminobenzoate: step 1/2. Its activity is regulated as follows. Is potently inhibited by sulfonamides, with Ki values between 25 nM and 850 nM. Functionally, catalyzes the condensation of para-aminobenzoate (pABA) with 6-hydroxymethyl-7,8-dihydropterin diphosphate (DHPt-PP) to form 7,8-dihydropteroate, the immediate precursor of folate derivatives. Is the target for the sulfonamide group of antimicrobial drugs. Sulfonamide drugs act as pABA analogs, they inhibit the reaction by acting as alternative substrates, leading to a 'dead end' sulfa-pterin product. This chain is Dihydropteroate synthase (sulA), found in Streptococcus pneumoniae (strain ATCC BAA-255 / R6).